A 317-amino-acid chain; its full sequence is Melanocyte-stimulating hormone receptor (317 aa).

The Extracellular portion of the chain corresponds to 1–37; that stretch reads MPMHGAQRKLLGSLNSTPTATSNLGLAANHTGAPCLE. The N-linked (GlcNAc...) asparagine glycan is linked to Asn29. The helical transmembrane segment at 38 to 63 threads the bilayer; the sequence is VSIPDGLFLSLGLVSLVENVLVVAAI. Residues 64–72 lie on the Cytoplasmic side of the membrane; the sequence is AKNRNLHSS. A helical membrane pass occupies residues 73–93; sequence MYCFICCLALSDLLVSGSNML. Topologically, residues 94–118 are extracellular; it reads ETAVILLLEAGALATRTSAMQQLHN. The helical transmembrane segment at 119-140 threads the bilayer; it reads TIDVLTCSSMLCSLCFLGAIAV. The Cytoplasmic segment spans residues 141 to 163; that stretch reads DRYISIFYALRYHSIMTLPRAQR. A helical membrane pass occupies residues 164–183; the sequence is AIAAIWVASXLSSTLFITYY. Over 184-191 the chain is Extracellular; it reads DHAAVLLC. The helical transmembrane segment at 192 to 211 threads the bilayer; the sequence is LVVFFLAMLVLMAVLYVHML. At 212-240 the chain is on the cytoplasmic side; that stretch reads ARACQHAHGIIRLHKRQTPAHQGFGLRGA. Residues 241 to 266 traverse the membrane as a helical segment; it reads ATLTILLGIFFLCWGPFFLHLTLVVF. Residues 267-279 are Extracellular-facing; sequence CPQHLTCSCIFKN. Residues 280-300 form a helical membrane-spanning segment; it reads FKVFLTLIICNTIIDPLIYAF. Over 301–317 the chain is Cytoplasmic; it reads RSQELRRTLKEVLLCSW. A lipid anchor (S-palmitoyl cysteine) is attached at Cys315.

The protein belongs to the G-protein coupled receptor 1 family. As to quaternary structure, interacts with MGRN1, but does not undergo MGRN1-mediated ubiquitination; this interaction competes with GNAS-binding and thus inhibits agonist-induced cAMP production. Interacts with OPN3; the interaction results in a decrease in MC1R-mediated cAMP signaling and ultimately a decrease in melanin production in melanocytes.

It is found in the cell membrane. Its function is as follows. Receptor for MSH (alpha, beta and gamma) and ACTH. The activity of this receptor is mediated by G proteins which activate adenylate cyclase. Mediates melanogenesis, the production of eumelanin (black/brown) and phaeomelanin (red/yellow), via regulation of cAMP signaling in melanocytes. The chain is Melanocyte-stimulating hormone receptor (MC1R) from Saguinus midas (Golden-handed tamarin).